The sequence spans 336 residues: tRNA N6-adenosine threonylcarbamoyltransferase (336 aa).

Fe cation-binding residues include H114 and H118. Substrate-binding positions include L136–G140, D169, G182, D186, and N275. Residue D301 participates in Fe cation binding.

This sequence belongs to the KAE1 / TsaD family. Requires Fe(2+) as cofactor.

It is found in the cytoplasm. It catalyses the reaction L-threonylcarbamoyladenylate + adenosine(37) in tRNA = N(6)-L-threonylcarbamoyladenosine(37) in tRNA + AMP + H(+). Functionally, required for the formation of a threonylcarbamoyl group on adenosine at position 37 (t(6)A37) in tRNAs that read codons beginning with adenine. Is involved in the transfer of the threonylcarbamoyl moiety of threonylcarbamoyl-AMP (TC-AMP) to the N6 group of A37, together with TsaE and TsaB. TsaD likely plays a direct catalytic role in this reaction. The chain is tRNA N6-adenosine threonylcarbamoyltransferase from Streptococcus pneumoniae (strain Hungary19A-6).